The sequence spans 133 residues: Interleukin-4 (133 aa).

Positions Met1–Gly24 are cleaved as a signal peptide. Cystine bridges form between Cys27–Cys133, Cys48–Cys85, and Cys70–Cys105. Asn62, Asn96, Asn102, and Asn108 each carry an N-linked (GlcNAc...) asparagine glycan.

The protein belongs to the IL-4/IL-13 family.

It is found in the secreted. In terms of biological role, participates in at least several B-cell activation processes as well as of other cell types. It is a costimulator of DNA-synthesis. It induces the expression of class II MHC molecules on resting B-cells. It enhances both secretion and cell surface expression of IgE and IgG1. It also regulates the expression of the low affinity Fc receptor for IgE (CD23) on both lymphocytes and monocytes. Positively regulates IL31RA expression in macrophages. Stimulates autophagy in dendritic cells by interfering with mTORC1 signaling and through the induction of RUFY4. The sequence is that of Interleukin-4 (IL4) from Lama glama (Llama).